A 247-amino-acid polypeptide reads, in one-letter code: MNDEASTPIQEDLKEESAVDLAQEAKPTSDEPSLSNVAEGSQEAGAETDVTSSDAKDSSSQALDNEARLEQLEREHETLNSQYMRIAADFDNFRKRQSRDQDDLRLQLQCNTLSSILPVVDNFDRARQQLNPEGEEAQALHKSYQGLYKQLVDVLKQLGVAPMRVVGQTFDPSLHEAVLREPSDELAEDIIVEELQRGYHLNGRVLRHALVKVSMGPGPKDDGEETITEQSLEGDNTTDQQSSEKSD.

2 disordered regions span residues 1 to 64 and 214 to 247; these read MNDE…QALD and SMGPGPKDDGEETITEQSLEGDNTTDQQSSEKSD. Composition is skewed to polar residues over residues 30-39, 49-63, and 228-241; these read DEPSLSNVAE, DVTSSDAKDSSSQAL, and TEQSLEGDNTTDQQ.

It belongs to the GrpE family. In terms of assembly, homodimer.

The protein localises to the cytoplasm. Participates actively in the response to hyperosmotic and heat shock by preventing the aggregation of stress-denatured proteins, in association with DnaK and GrpE. It is the nucleotide exchange factor for DnaK and may function as a thermosensor. Unfolded proteins bind initially to DnaJ; upon interaction with the DnaJ-bound protein, DnaK hydrolyzes its bound ATP, resulting in the formation of a stable complex. GrpE releases ADP from DnaK; ATP binding to DnaK triggers the release of the substrate protein, thus completing the reaction cycle. Several rounds of ATP-dependent interactions between DnaJ, DnaK and GrpE are required for fully efficient folding. In Prochlorococcus marinus (strain MIT 9211), this protein is Protein GrpE.